The chain runs to 361 residues: Hydroxymethylglutaryl-CoA synthase (361 aa).

The Proton donor/acceptor role is filled by E92. C124 (acyl-thioester intermediate) is an active-site residue. Residues C124, S165, T214, and H247 each coordinate (3S)-3-hydroxy-3-methylglutaryl-CoA. The Proton donor/acceptor role is filled by H247. Position 252 (K252) interacts with CoA. Residues K256, N279, and S309 each coordinate (3S)-3-hydroxy-3-methylglutaryl-CoA.

It belongs to the thiolase-like superfamily. Archaeal HMG-CoA synthase family. Interacts with acetoacetyl-CoA thiolase that catalyzes the precedent step in the pathway and with a DUF35 protein. The acetoacetyl-CoA thiolase/HMG-CoA synthase complex channels the intermediate via a fused CoA-binding site, which allows for efficient coupling of the endergonic thiolase reaction with the exergonic HMGCS reaction.

It carries out the reaction acetoacetyl-CoA + acetyl-CoA + H2O = (3S)-3-hydroxy-3-methylglutaryl-CoA + CoA + H(+). It functions in the pathway metabolic intermediate biosynthesis; (R)-mevalonate biosynthesis; (R)-mevalonate from acetyl-CoA: step 2/3. Functionally, catalyzes the condensation of acetyl-CoA with acetoacetyl-CoA to form 3-hydroxy-3-methylglutaryl-CoA (HMG-CoA). Functions in the mevalonate (MVA) pathway leading to isopentenyl diphosphate (IPP), a key precursor for the biosynthesis of isoprenoid compounds that are building blocks of archaeal membrane lipids. The sequence is that of Hydroxymethylglutaryl-CoA synthase from Aeropyrum pernix (strain ATCC 700893 / DSM 11879 / JCM 9820 / NBRC 100138 / K1).